A 670-amino-acid chain; its full sequence is MSHLPMKLLRKKIEKRNLKLRQRNLKFQGASNLTLSETQNGDVSEETMGSRKVKKSKQKPMNVGLSETQNGGMSQEAVGNIKVTKSPQKSTVLTNGEAAMQSSNSESKKKKKKKRKMVNDAEPDTKKAKTENKGKSEEESAETTKETENNVEKPDNDEDESEVPSLPLGLTGAFEDTSFASLCNLVNENTLKAIKEMGFTNMTEIQHKSIRPLLEGRDLLAAAKTGSGKTLAFLIPAVELIVKLRFMPRNGTGVLILSPTRELAMQTFGVLKELMTHHVHTYGLIMGGSNRSAEAQKLGNGINIIVATPGRLLDHMQNTPGFMYKNLQCLVIDEADRILDVGFEEELKQIIKLLPTRRQTMLFSATQTRKVEDLARISLKKEPLYVGVDDDKANATVDGLEQGYVVCPSEKRFLLLFTFLKKNRKKKLMVFFSSCMSVKYHYELLNYIDLPVLAIHGKQKQNKRTTTFFQFCNADSGTLLCTDVAARGLDIPEVDWIVQYDPPDDPKEYIHRVGRTARGLNGRGHALLILRPEELGFLRYLKQSKVPLSEFDFSWSKISDIQSQLEKLIEKNYFLHKSAQEAYKSYIRAYDSHSLKQIFNVNNLNLPQVALSFGFKVPPFVDLNVNSNEGKQKKRGGGGGFGYQKTKKVEKSKIFKHISKKSSDSRQFSH.

Composition is skewed to polar residues over residues 31-42 (SNLTLSETQNGD) and 83-105 (VTKS…SSNS). Residues 31–169 (SNLTLSETQN…ESEVPSLPLG (139 aa)) are disordered. Residues 117–154 (MVNDAEPDTKKAKTENKGKSEEESAETTKETENNVEKP) show a composition bias toward basic and acidic residues. Residues 179–207 (FASLCNLVNENTLKAIKEMGFTNMTEIQH) carry the Q motif motif. The Helicase ATP-binding domain maps to 210-385 (IRPLLEGRDL…RISLKKEPLY (176 aa)). 223–230 (AKTGSGKT) contributes to the ATP binding site. A DEAD box motif is present at residues 333–336 (DEAD). Residues 399–569 (GLEQGYVVCP…DIQSQLEKLI (171 aa)) enclose the Helicase C-terminal domain.

Belongs to the DEAD box helicase family. DDX18/HAS1 subfamily. As to quaternary structure, interacts with NOL8; the interaction is RNA-dependent. Interacts with PRC2 complex components EZH2, SUZ2 and JARID2; these interactions prevent deposition of the repressive H3K27me3 mark onto rDNA in pluripotent cells.

It localises to the nucleus. It is found in the nucleolus. The protein localises to the chromosome. It carries out the reaction ATP + H2O = ADP + phosphate + H(+). Its function is as follows. ATP-dependent RNA helicase that plays a role in the regulation of R-loop homeostasis in both endogenous R-loop-prone regions and at sites of DNA damage. At endogenous loci such as actively transcribed genes, may act as a helicase to resolve the formation of R-loop during transcription and prevent the interference of R-loop with DNA-replication machinery. Also participates in the removal of DNA-lesion-associated R-loop. Plays an essential role for establishing pluripotency during embryogenesis and for pluripotency maintenance in embryonic stem cells. Mechanistically, prevents the polycomb repressive complex 2 (PRC2) from accessing rDNA loci and protects the active chromatin status in nucleolus. This is ATP-dependent RNA helicase DDX18 (DDX18) from Homo sapiens (Human).